Here is a 310-residue protein sequence, read N- to C-terminus: Quinolinate synthase (310 aa).

Iminosuccinate is bound by residues His27 and Ser44. Cys89 contributes to the [4Fe-4S] cluster binding site. Iminosuccinate is bound by residues 115-117 and Ser132; that span reads YVN. Position 175 (Cys175) interacts with [4Fe-4S] cluster. Iminosuccinate-binding positions include 201-203 and Thr222; that span reads HPE. Cys267 contacts [4Fe-4S] cluster.

It belongs to the quinolinate synthase family. Type 2 subfamily. [4Fe-4S] cluster is required as a cofactor.

The protein resides in the cytoplasm. The catalysed reaction is iminosuccinate + dihydroxyacetone phosphate = quinolinate + phosphate + 2 H2O + H(+). It functions in the pathway cofactor biosynthesis; NAD(+) biosynthesis; quinolinate from iminoaspartate: step 1/1. In terms of biological role, catalyzes the condensation of iminoaspartate with dihydroxyacetone phosphate to form quinolinate. The protein is Quinolinate synthase of Thermus thermophilus (strain ATCC 27634 / DSM 579 / HB8).